Consider the following 1255-residue polypeptide: ATP-binding cassette sub-family B member 5 (1255 aa).

Residues 46–66 (IVLMTLGILASMINGATVPLM) traverse the membrane as a helical segment. One can recognise an ABC transmembrane type-1 1 domain in the interval 51–351 (LGILASMING…SVAPHLETFT (301 aa)). Asparagine 86 and asparagine 92 each carry an N-linked (GlcNAc...) asparagine glycan. The helical transmembrane segment at 104 to 124 (IIVLTLYYIGIGAAALIFGYV) threads the bilayer. Asparagine 189 carries an N-linked (GlcNAc...) asparagine glycan. Transmembrane regions (helical) follow at residues 290 to 310 (LSLGAVYFFMNGAYGLAFWYG) and 314 to 334 (IFGGEPGYTIGTILAVFFSVI). N-linked (GlcNAc...) asparagine glycans are attached at residues asparagine 372 and asparagine 391. One can recognise an ABC transporter 1 domain in the interval 387–623 (IEFKNVSFSY…QGLYYSLAMA (237 aa)). An ATP-binding site is contributed by 422-429 (GPSGSGKS). Asparagine 643 is a glycosylation site (N-linked (GlcNAc...) asparagine). The next 2 helical transmembrane spans lie at 694-714 (VLGTLASALNGSVHPVFSIIF) and 738-758 (MMLVVLGIVALVTYLMQGLFY). In terms of domain architecture, ABC transmembrane type-1 2 spans 694-981 (VLGTLASALN…TLVWAPEYSK (288 aa)). Asparagine 790 carries N-linked (GlcNAc...) asparagine glycosylation. 3 helical membrane passes run 814 to 836 (LGIVTQDVSNMSLSILISFIYGW), 841 to 863 (LILSFAPVLAVTGMIQTAAMAGF), and 955 to 975 (MFIVFTAIAYGAMAIGETLVW). Positions 1016–1254 (LEFREVSFVY…GDTYFKLVAA (239 aa)) constitute an ABC transporter 2 domain. Asparagine 1036 is a glycosylation site (N-linked (GlcNAc...) asparagine). ATP is bound at residue 1051–1058 (GSSGCGKS). Asparagine 1105, asparagine 1189, and asparagine 1229 each carry an N-linked (GlcNAc...) asparagine glycan.

It belongs to the ABC transporter superfamily. ABCB family. Multidrug resistance exporter (TC 3.A.1.201) subfamily. In terms of tissue distribution, in developing eye, expressed in basal limbal epithelium but not in central cornea. Acts as a marker of limbal stem cells.

Its subcellular location is the cell membrane. The catalysed reaction is daunorubicin(in) + ATP + H2O = daunorubicin(out) + ADP + phosphate + H(+). Functionally, energy-dependent efflux transporter responsible for decreased drug accumulation in multidrug-resistant cells. Specifically present in limbal stem cells, where it plays a key role in corneal development and repair. The polypeptide is ATP-binding cassette sub-family B member 5 (Mus musculus (Mouse)).